A 96-amino-acid chain; its full sequence is UPF0235 protein Spro_4033 (96 aa).

Belongs to the UPF0235 family.

This chain is UPF0235 protein Spro_4033, found in Serratia proteamaculans (strain 568).